The following is a 405-amino-acid chain: MEIILGIVMFTVIVLALALMILFAKSKLVSEGDITIKVNDEKELTMPAGGKLLGALASQGIFVPSACGGGGSCGQCRVVVKSGGGDILPTELSHISKREAREGCRLSCQVNVKTDMDIEVPEEVFGVKKWECTVISNDNKATFIKELKLAIPEGEEVPFRAGGYIQIEAPPHTVAYKDFDIPKEYHEDWDKYNLWQYVSKVNEPILRAYSMASYPEEKGIIMLNVRIATPPPRVPNAPPGQMSSYIWSLKPGDKVTISGPFGEFFAKDTDAEMVFIGGGAGMAPMRSHIFDQLKRLHSKRKITFWYGARSKREMFYVEDFDQLAAEFPNFTWHVALSDPLPEDNWDGYTGFIHNVVYENHLKNHEAPEDCEFYMCGPPIMNQSVIKMLKDLGVEDENILLDDFGG.

The helical transmembrane segment at 3–23 (IILGIVMFTVIVLALALMILF) threads the bilayer. One can recognise a 2Fe-2S ferredoxin-type domain in the interval 32 to 124 (GDITIKVNDE…DMDIEVPEEV (93 aa)). 4 residues coordinate [2Fe-2S] cluster: Cys67, Cys73, Cys76, and Cys108. Residues 127–267 (VKKWECTVIS…SGPFGEFFAK (141 aa)) enclose the FAD-binding FR-type domain.

This sequence belongs to the NqrF family. As to quaternary structure, composed of six subunits; NqrA, NqrB, NqrC, NqrD, NqrE and NqrF. [2Fe-2S] cluster is required as a cofactor. FAD serves as cofactor.

It is found in the cell inner membrane. The enzyme catalyses a ubiquinone + n Na(+)(in) + NADH + H(+) = a ubiquinol + n Na(+)(out) + NAD(+). Its function is as follows. NQR complex catalyzes the reduction of ubiquinone-1 to ubiquinol by two successive reactions, coupled with the transport of Na(+) ions from the cytoplasm to the periplasm. The first step is catalyzed by NqrF, which accepts electrons from NADH and reduces ubiquinone-1 to ubisemiquinone by a one-electron transfer pathway. This chain is Na(+)-translocating NADH-quinone reductase subunit F, found in Neisseria gonorrhoeae (strain ATCC 700825 / FA 1090).